A 234-amino-acid chain; its full sequence is Probable transcriptional regulatory protein PFL_3960 (234 aa).

This sequence belongs to the TACO1 family.

The protein localises to the cytoplasm. This Pseudomonas fluorescens (strain ATCC BAA-477 / NRRL B-23932 / Pf-5) protein is Probable transcriptional regulatory protein PFL_3960.